The sequence spans 426 residues: Bile acid CoA-transferase BaiF (426 aa).

The Nucleophile role is filled by Asp168.

The protein belongs to the CoA-transferase III family.

The enzyme catalyses lithocholoyl-CoA + cholate = choloyl-CoA + lithocholate. It carries out the reaction deoxycholoyl-CoA + cholate = choloyl-CoA + deoxycholate. The catalysed reaction is allodeoxycholoyl-CoA + cholate = allodeoxycholate + choloyl-CoA. It catalyses the reaction allocholate + deoxycholoyl-CoA = allocholoyl-CoA + deoxycholate. The enzyme catalyses allocholate + lithocholoyl-CoA = allocholoyl-CoA + lithocholate. It carries out the reaction allocholate + allodeoxycholoyl-CoA = allocholoyl-CoA + allodeoxycholate. The catalysed reaction is lithocholoyl-CoA + chenodeoxycholate = chenodeoxycholoyl-CoA + lithocholate. It catalyses the reaction ursodeoxycholate + deoxycholoyl-CoA = ursodeoxycholoyl-CoA + deoxycholate. The enzyme catalyses ursodeoxycholate + lithocholoyl-CoA = ursodeoxycholoyl-CoA + lithocholate. It carries out the reaction allodeoxycholoyl-CoA + ursodeoxycholate = ursodeoxycholoyl-CoA + allodeoxycholate. The catalysed reaction is beta-muricholate + lithocholoyl-CoA = beta-muricholoyl-CoA + lithocholate. It catalyses the reaction beta-muricholate + deoxycholoyl-CoA = beta-muricholoyl-CoA + deoxycholate. The enzyme catalyses beta-muricholate + allodeoxycholoyl-CoA = beta-muricholoyl-CoA + allodeoxycholate. It carries out the reaction choloyl-CoA + H2O = cholate + CoA + H(+). The catalysed reaction is chenodeoxycholoyl-CoA + H2O = chenodeoxycholate + CoA + H(+). The protein operates within lipid metabolism; bile acid biosynthesis. In terms of biological role, functions in the bile acid 7alpha-dehydroxylation pathway, which forms secondary bile acids via the 7alpha-dehydroxylation of primary bile acids, and is carried out by intestinal anaerobic bacteria. Acts as a bile acid CoA transferase with broad bile acid substrate specificity. Catalyzes the transfer of the CoA moiety of secondary bile acid-CoA compounds to primary bile acids. Can use lithocholoyl-CoA, deoxycholoyl-CoA and allodeoxycholoyl-CoA as bile acid CoA donors and cholate, allocholate, chenodeoxycholate, ursodeoxycholate, and beta-muricholate as bile acid CoA acceptors. Also displays CoA hydrolase activity, being able to catalyze the hydrolysis of choloyl-CoA, 3-dehydrocholoyl-CoA, and chenodeoxycholoyl-CoA, releasing CoA and the corresponding free bile acid. However, this latter activity may not represent the actual activity of this enzyme, since using a transferase rather than hydrolase, the bacteria conserve the thioester bond energy, saving ATP molecules. Shows no hydrolytic activity with acetyl-CoA, isovaleryl-CoA, palmitoyl-CoA, or phenylacetyl-CoA as substrates. This chain is Bile acid CoA-transferase BaiF, found in Clostridium scindens (strain JCM 10418 / VPI 12708).